Here is a 703-residue protein sequence, read N- to C-terminus: DNA ligase (703 aa).

NAD(+)-binding positions include Asp54–Asp58, Ser103–Leu104, and Glu132. The active-site N6-AMP-lysine intermediate is Lys134. NAD(+) is bound by residues Arg155, Glu192, Lys308, and Lys332. Zn(2+)-binding residues include Cys426, Cys429, Cys444, and Cys450. A BRCT domain is found at Glu608–Pro698.

Belongs to the NAD-dependent DNA ligase family. LigA subfamily. It depends on Mg(2+) as a cofactor. The cofactor is Mn(2+).

It carries out the reaction NAD(+) + (deoxyribonucleotide)n-3'-hydroxyl + 5'-phospho-(deoxyribonucleotide)m = (deoxyribonucleotide)n+m + AMP + beta-nicotinamide D-nucleotide.. DNA ligase that catalyzes the formation of phosphodiester linkages between 5'-phosphoryl and 3'-hydroxyl groups in double-stranded DNA using NAD as a coenzyme and as the energy source for the reaction. It is essential for DNA replication and repair of damaged DNA. This chain is DNA ligase, found in Parafrankia sp. (strain EAN1pec).